We begin with the raw amino-acid sequence, 299 residues long: GTPase Era (299 aa).

Residues 2 to 170 (KTGFVALAGK…LDLIIENLPE (169 aa)) enclose the Era-type G domain. The G1 stretch occupies residues 10–17 (GKPNVGKS). Residue 10–17 (GKPNVGKS) coordinates GTP. Positions 36–40 (QTTRN) are G2. Positions 57 to 60 (DTPG) are G3. GTP contacts are provided by residues 57-61 (DTPGI) and 119-122 (NKID). Residues 119–122 (NKID) are G4. Residues 149 to 151 (TSA) form a G5 region. One can recognise a KH type-2 domain in the interval 201–278 (TYEEIPHSVA…FLDLHVKVKR (78 aa)).

This sequence belongs to the TRAFAC class TrmE-Era-EngA-EngB-Septin-like GTPase superfamily. Era GTPase family. Monomer.

It localises to the cytoplasm. The protein localises to the cell inner membrane. Its function is as follows. An essential GTPase that binds both GDP and GTP, with rapid nucleotide exchange. Plays a role in 16S rRNA processing and 30S ribosomal subunit biogenesis and possibly also in cell cycle regulation and energy metabolism. In Thermosipho melanesiensis (strain DSM 12029 / CIP 104789 / BI429), this protein is GTPase Era.